Here is a 699-residue protein sequence, read N- to C-terminus: MAESVRVAVRCRPFNQREKDLNTTLCVGMTPNVGQVNLNAPDGAAKDFTFDGAYFMDSTGEQIYNDIVFPLVENVIEGYNGTVFAYGQTGSGKTFSMQGIETIPAQRGVIPRAFDHIFTATATTENVKFLVHCSYLEIYNEEVRDLLGADNKQKLEIKEQPDRGVYVAGLSMHVCHDVPACKELMTRGFNNRHVGATLMNKDSSRSHSIFTVYVEGMTETGSIRMGKLNLVDLAGSERQSKTGATGDRLKEATKINLSLSALGNVISALVDGKSKHIPYRDSKLTRLLQDSLGGNTKTIMIACVSPSSDNYDETLSTLRYANRAKNIKNKPTINEDPKDALLREYQEEIARLKSMVQPGAVGVGAPAQDAFSIEEERKKLREEFEEAMNDLRGEYEREQTSKAELQKDLESLRADYERANANLDNLNPEEAAKKIQQLQDQFIGGEEAGNTQLKQKRMKQLKEAETKTQKLAAALNVHKDDPLLQVYSTTQEKLDAVTSQLEKEVKKSKGYEREIEDLHGEFELDRLDYLDTIRKQDQQLKLLMQIMDKIQPIIKKDTNYSNVDRIKKEAVWNEDESRWILPEMSMSRTILPLANNGYMQEPARQENTLLRSNFDDKLRERLAKSDSENLANSYFKPVKQINVINKYKSDQKLSTSKSLFPSKTPTFDGLVNGVVYTDALYERAQSAKRPPRLASLNPK.

Residues 4–327 form the Kinesin motor domain; it reads SVRVAVRCRP…LRYANRAKNI (324 aa). 87-94 contributes to the ATP binding site; the sequence is GQTGSGKT. A coiled-coil region spans residues 339–523; it reads DALLREYQEE…EIEDLHGEFE (185 aa).

This sequence belongs to the TRAFAC class myosin-kinesin ATPase superfamily. Kinesin family. Kinesin II subfamily. As to expression, expressed in an exclusive set of 26 chemosensory neurons whose dendritic endings are exposed to the external environment; six IL2 neurons of the inner labial sensilla, 8 pairs of amphid neurons in the head, and 2 pairs of phasmid neurons in the tail.

The protein localises to the cytoplasm. It is found in the cytoskeleton. The protein resides in the cell projection. Its subcellular location is the cilium. It localises to the cilium axoneme. The protein localises to the cilium basal body. Kinesin motor protein which is required for the anterograde intraflagellar transport (IFT) along the middle segment of the sensory neuron cilia together with the kinesin II motor complex (composed of klp-11, klp-20 and kap-1) and on its own, is required for IFT along the distal segment. In addition, regulates the length of cilia. May have a role during neurogenesis and axonal transport. The chain is Osmotic avoidance abnormal protein 3 from Caenorhabditis elegans.